The chain runs to 354 residues: Serum paraoxonase/arylesterase 2 (354 aa).

The cysteines at positions 42 and 352 are disulfide-linked. Residues Glu53 and Asp54 each coordinate Ca(2+). Residue His114 is the Proton acceptor of the active site. Ca(2+)-binding residues include Ile116, Asn167, Asp168, and Asn223. The N-linked (GlcNAc...) asparagine glycan is linked to Asn254. Residues Asp268 and Asn269 each contribute to the Ca(2+) site. Asn269 and Asn323 each carry an N-linked (GlcNAc...) asparagine glycan.

This sequence belongs to the paraoxonase family. In terms of assembly, homotrimer. It depends on Ca(2+) as a cofactor. In terms of processing, glycosylated. The signal sequence is not cleaved.

The protein resides in the membrane. It catalyses the reaction a phenyl acetate + H2O = a phenol + acetate + H(+). The catalysed reaction is an N-acyl-L-homoserine lactone + H2O = an N-acyl-L-homoserine + H(+). Its function is as follows. Capable of hydrolyzing lactones and a number of aromatic carboxylic acid esters. This is Serum paraoxonase/arylesterase 2 (PON2) from Bos taurus (Bovine).